Here is a 70-residue protein sequence, read N- to C-terminus: Conotoxin Cl6.13 (70 aa).

Residues 1 to 21 (MKFPLLFISLALAAFLTRVQD) form the signal peptide. A propeptide spanning residues 22 to 33 (ADSSVISKEKSV) is cleaved from the precursor. Cystine bridges form between C41–C58, C48–C63, and C57–C68.

As to expression, expressed by the venom duct.

The protein localises to the secreted. The polypeptide is Conotoxin Cl6.13 (Californiconus californicus (California cone)).